A 309-amino-acid chain; its full sequence is Manganese-dependent inorganic pyrophosphatase (309 aa).

6 residues coordinate Mn(2+): histidine 9, aspartate 13, aspartate 15, aspartate 75, histidine 97, and aspartate 149.

Homodimer. Mn(2+) is required as a cofactor.

Its subcellular location is the cytoplasm. It carries out the reaction diphosphate + H2O = 2 phosphate + H(+). The sequence is that of Manganese-dependent inorganic pyrophosphatase (ppaC) from Bacillus subtilis (strain 168).